A 552-amino-acid chain; its full sequence is CTP synthase (552 aa).

Residues 1-270 form an amidoligase domain region; the sequence is MTKFVFVTGG…DGLICDKLRL (270 aa). Serine 13 lines the CTP pocket. Residue serine 13 coordinates UTP. Residues 14-19 and aspartate 71 each bind ATP; that span reads SLGKGI. The Mg(2+) site is built by aspartate 71 and glutamate 144. CTP contacts are provided by residues 151 to 153, 191 to 196, and lysine 227; these read DIE and KTKPTQ. UTP contacts are provided by residues 191–196 and lysine 227; that span reads KTKPTQ. Residues 295–548 form the Glutamine amidotransferase type-1 domain; that stretch reads QIAMVGKYVE…IKAAVEHQKP (254 aa). Glycine 357 contributes to the L-glutamine binding site. Cysteine 384 (nucleophile; for glutamine hydrolysis) is an active-site residue. L-glutamine contacts are provided by residues 385–388, glutamate 408, and arginine 474; that span reads LGMQ. Residues histidine 521 and glutamate 523 contribute to the active site.

It belongs to the CTP synthase family. Homotetramer.

The catalysed reaction is UTP + L-glutamine + ATP + H2O = CTP + L-glutamate + ADP + phosphate + 2 H(+). The enzyme catalyses L-glutamine + H2O = L-glutamate + NH4(+). It carries out the reaction UTP + NH4(+) + ATP = CTP + ADP + phosphate + 2 H(+). It functions in the pathway pyrimidine metabolism; CTP biosynthesis via de novo pathway; CTP from UDP: step 2/2. With respect to regulation, allosterically activated by GTP, when glutamine is the substrate; GTP has no effect on the reaction when ammonia is the substrate. The allosteric effector GTP functions by stabilizing the protein conformation that binds the tetrahedral intermediate(s) formed during glutamine hydrolysis. Inhibited by the product CTP, via allosteric rather than competitive inhibition. Its function is as follows. Catalyzes the ATP-dependent amination of UTP to CTP with either L-glutamine or ammonia as the source of nitrogen. Regulates intracellular CTP levels through interactions with the four ribonucleotide triphosphates. The sequence is that of CTP synthase from Acidovorax ebreus (strain TPSY) (Diaphorobacter sp. (strain TPSY)).